A 155-amino-acid polypeptide reads, in one-letter code: Ribonuclease H (155 aa).

Residues 1-142 enclose the RNase H type-1 domain; sequence MLKQVEIFTD…CDVLARDAAS (142 aa). The Mg(2+) site is built by Asp10, Glu48, Asp70, and Asp134.

It belongs to the RNase H family. Monomer. Mg(2+) serves as cofactor.

It is found in the cytoplasm. It carries out the reaction Endonucleolytic cleavage to 5'-phosphomonoester.. In terms of biological role, endonuclease that specifically degrades the RNA of RNA-DNA hybrids. This chain is Ribonuclease H, found in Serratia proteamaculans (strain 568).